The chain runs to 296 residues: Decaprenyl diphosphate synthase (296 aa).

Residues Met-1–Val-58 are disordered. Asp-76 is a catalytic residue. Asp-76 serves as a coordination point for Mg(2+). Residues Gly-77 to Arg-80, Trp-81, Arg-89, His-93, and Ser-121 to Glu-123 contribute to the substrate site. Asn-124 functions as the Proton acceptor in the catalytic mechanism. Residues Trp-125, Arg-127, Arg-244, and Arg-250–Ser-252 each bind substrate. Position 263 (Glu-263) interacts with Mg(2+).

Belongs to the UPP synthase family. As to quaternary structure, homodimer. Mg(2+) is required as a cofactor.

The protein resides in the cell membrane. The enzyme catalyses (2Z,6E)-farnesyl diphosphate + 7 isopentenyl diphosphate = (2Z,6Z,10Z,14Z,18Z,22Z,26Z,30Z,34E)-decaprenyl diphosphate + 7 diphosphate. It carries out the reaction n isopentenyl diphosphate + (2E,6E)-farnesyl diphosphate = a di-trans,poly-cis-polyprenyl diphosphate + n diphosphate. In terms of biological role, catalyzes the sequential condensation of isopentenyl diphosphate (IPP) in the cis configuration with (2Z,6E)-farnesyl diphosphate (Z-FPP or EZ-FPP) generating the 50 carbon product trans,polycis-decaprenyl diphosphate. When (2E,6E)-farnesyl diphosphate (E-FPP or EE-FPP) is used in vitro, both primary products decaprenyl diphosphate and (2E,6E,10E)-geranylgeranyl diphosphate (EEE-GGPP) are synthesized. M.tuberculosis does not synthesize (2E,6E,10Z)-geranylgeranyl diphosphate (EEZ-GGPP) and heptaprenyl diphosphate. Can also accept many different allylic substrates, including E-geranyl diphosphate (E-GPP), neryl diphosphate (NPP), and all-trans-geranyl-geranyl diphosphate. The chain is Decaprenyl diphosphate synthase (uppS) from Mycobacterium leprae (strain TN).